The chain runs to 237 residues: Phosphoribosylaminoimidazole-succinocarboxamide synthase (237 aa).

This sequence belongs to the SAICAR synthetase family.

It carries out the reaction 5-amino-1-(5-phospho-D-ribosyl)imidazole-4-carboxylate + L-aspartate + ATP = (2S)-2-[5-amino-1-(5-phospho-beta-D-ribosyl)imidazole-4-carboxamido]succinate + ADP + phosphate + 2 H(+). It participates in purine metabolism; IMP biosynthesis via de novo pathway; 5-amino-1-(5-phospho-D-ribosyl)imidazole-4-carboxamide from 5-amino-1-(5-phospho-D-ribosyl)imidazole-4-carboxylate: step 1/2. This is Phosphoribosylaminoimidazole-succinocarboxamide synthase from Alteromonas mediterranea (strain DSM 17117 / CIP 110805 / LMG 28347 / Deep ecotype).